The sequence spans 150 residues: 3-dehydroquinate dehydratase (150 aa).

Y26 acts as the Proton acceptor in catalysis. N77, H83, and D90 together coordinate substrate. Residue H103 is the Proton donor of the active site. Substrate-binding positions include 104 to 105 and R114; that span reads LS.

It belongs to the type-II 3-dehydroquinase family. As to quaternary structure, homododecamer.

It catalyses the reaction 3-dehydroquinate = 3-dehydroshikimate + H2O. Its pathway is metabolic intermediate biosynthesis; chorismate biosynthesis; chorismate from D-erythrose 4-phosphate and phosphoenolpyruvate: step 3/7. In terms of biological role, catalyzes a trans-dehydration via an enolate intermediate. This chain is 3-dehydroquinate dehydratase, found in Yersinia pseudotuberculosis serotype O:1b (strain IP 31758).